Here is a 480-residue protein sequence, read N- to C-terminus: Methylenetetrahydrofolate--tRNA-(uracil-5-)-methyltransferase TrmFO (480 aa).

Residue 15-20 participates in FAD binding; sequence GGGLAG.

It belongs to the MnmG family. TrmFO subfamily. It depends on FAD as a cofactor.

The protein localises to the cytoplasm. The enzyme catalyses uridine(54) in tRNA + (6R)-5,10-methylene-5,6,7,8-tetrahydrofolate + NADH + H(+) = 5-methyluridine(54) in tRNA + (6S)-5,6,7,8-tetrahydrofolate + NAD(+). It catalyses the reaction uridine(54) in tRNA + (6R)-5,10-methylene-5,6,7,8-tetrahydrofolate + NADPH + H(+) = 5-methyluridine(54) in tRNA + (6S)-5,6,7,8-tetrahydrofolate + NADP(+). Functionally, catalyzes the folate-dependent formation of 5-methyl-uridine at position 54 (M-5-U54) in all tRNAs. The polypeptide is Methylenetetrahydrofolate--tRNA-(uracil-5-)-methyltransferase TrmFO (Sinorhizobium medicae (strain WSM419) (Ensifer medicae)).